A 288-amino-acid chain; its full sequence is Small ribosomal subunit protein uS9m (288 aa).

The tract at residues 269-288 (VERKKPGKKKARKMPTWVKR) is disordered.

Belongs to the universal ribosomal protein uS9 family.

The protein resides in the mitochondrion. This chain is Small ribosomal subunit protein uS9m (MRPS9), found in Candida glabrata (strain ATCC 2001 / BCRC 20586 / JCM 3761 / NBRC 0622 / NRRL Y-65 / CBS 138) (Yeast).